Here is a 73-residue protein sequence, read N- to C-terminus: SIFamide-related peptide (73 aa).

The N-terminal stretch at Met-1–Ala-23 is a signal peptide. Phenylalanine amide is present on Phe-35. A propeptide spanning residues Ser-39–Asn-73 is cleaved from the precursor.

In terms of tissue distribution, expressed in brain, the retrocerebral complex and in ventral, thoracic and abdominal ganglia (at protein level).

It localises to the secreted. The sequence is that of SIFamide-related peptide from Camponotus floridanus (Florida carpenter ant).